Consider the following 188-residue polypeptide: Elongation factor P (188 aa).

It belongs to the elongation factor P family.

It localises to the cytoplasm. It participates in protein biosynthesis; polypeptide chain elongation. In terms of biological role, involved in peptide bond synthesis. Stimulates efficient translation and peptide-bond synthesis on native or reconstituted 70S ribosomes in vitro. Probably functions indirectly by altering the affinity of the ribosome for aminoacyl-tRNA, thus increasing their reactivity as acceptors for peptidyl transferase. This Azotobacter vinelandii (strain DJ / ATCC BAA-1303) protein is Elongation factor P.